Here is a 428-residue protein sequence, read N- to C-terminus: MQILVYDNLDEKQKEEALKRPAISAKDEISKIVSSIIKEVQEKGDKALIEQALKFDKAEISKIKITQEEITQASNRLDKDLQEAILVAYENIKKFHEAQIPHEIALETTKGVKCEVLTRPIEKVGLYIPGGLAPLFSTVLMLAIPAKIAGCEKIVLASPAKINDAVLFCAKLCGVDEIYQMGGAGAIAALTYGTQSVLKVDKIFGPGNAFVTEAKRQVSSDINGAAIDMQAGPSEVLVIADDLANEKFVASDLLSQAEHGADSQVILVCLSQDFAKKASDEVQSQLELLPRKELASKSIANSRIIIAKDLNQALEISNLYAPEHLIIQTQNPRELLKGVKHAGSVFLGAYSPESMGDYASGTNHVLPTYGLTKTHSSLGLADFSKRMTVQELSKEGFLALGKSVEILAQNEHLDAHKNAVTFRLESLK.

Residues Ser-234, Gln-256, and His-259 each contribute to the substrate site. Gln-256 and His-259 together coordinate Zn(2+). Residues Glu-323 and His-324 each act as proton acceptor in the active site. Substrate contacts are provided by His-324, Asp-357, Glu-411, and His-416. Position 357 (Asp-357) interacts with Zn(2+). His-416 contributes to the Zn(2+) binding site.

It belongs to the histidinol dehydrogenase family. Zn(2+) is required as a cofactor.

The enzyme catalyses L-histidinol + 2 NAD(+) + H2O = L-histidine + 2 NADH + 3 H(+). The protein operates within amino-acid biosynthesis; L-histidine biosynthesis; L-histidine from 5-phospho-alpha-D-ribose 1-diphosphate: step 9/9. Catalyzes the sequential NAD-dependent oxidations of L-histidinol to L-histidinaldehyde and then to L-histidine. The protein is Histidinol dehydrogenase of Campylobacter jejuni subsp. jejuni serotype O:2 (strain ATCC 700819 / NCTC 11168).